A 391-amino-acid chain; its full sequence is Succinyl-diaminopimelate desuccinylase (391 aa).

His78 contacts Zn(2+). Asp80 is a catalytic residue. Asp111 contributes to the Zn(2+) binding site. Glu145 functions as the Proton acceptor in the catalytic mechanism. 3 residues coordinate Zn(2+): Glu146, Glu174, and His360.

The protein belongs to the peptidase M20A family. DapE subfamily. In terms of assembly, homodimer. It depends on Zn(2+) as a cofactor. Co(2+) serves as cofactor.

The catalysed reaction is N-succinyl-(2S,6S)-2,6-diaminopimelate + H2O = (2S,6S)-2,6-diaminopimelate + succinate. The protein operates within amino-acid biosynthesis; L-lysine biosynthesis via DAP pathway; LL-2,6-diaminopimelate from (S)-tetrahydrodipicolinate (succinylase route): step 3/3. Catalyzes the hydrolysis of N-succinyl-L,L-diaminopimelic acid (SDAP), forming succinate and LL-2,6-diaminopimelate (DAP), an intermediate involved in the bacterial biosynthesis of lysine and meso-diaminopimelic acid, an essential component of bacterial cell walls. This Albidiferax ferrireducens (strain ATCC BAA-621 / DSM 15236 / T118) (Rhodoferax ferrireducens) protein is Succinyl-diaminopimelate desuccinylase.